Consider the following 167-residue polypeptide: UPF0587 protein F46B6.12 (167 aa).

4 residues coordinate Zn(2+): Cys-34, Cys-37, Cys-68, and Cys-71.

It belongs to the UPF0587 family.

This Caenorhabditis elegans protein is UPF0587 protein F46B6.12.